A 466-amino-acid chain; its full sequence is Adenosylhomocysteinase (466 aa).

Residues T57, D132, and E192 each contribute to the substrate site. 193 to 195 (TTT) serves as a coordination point for NAD(+). Positions 222 and 226 each coordinate substrate. Residues N227, 256–261 (GYGDVG), E279, N314, 335–337 (IGH), and N380 contribute to the NAD(+) site.

It belongs to the adenosylhomocysteinase family. It depends on NAD(+) as a cofactor.

Its subcellular location is the cytoplasm. It catalyses the reaction S-adenosyl-L-homocysteine + H2O = L-homocysteine + adenosine. The protein operates within amino-acid biosynthesis; L-homocysteine biosynthesis; L-homocysteine from S-adenosyl-L-homocysteine: step 1/1. May play a key role in the regulation of the intracellular concentration of adenosylhomocysteine. The chain is Adenosylhomocysteinase from Brucella anthropi (strain ATCC 49188 / DSM 6882 / CCUG 24695 / JCM 21032 / LMG 3331 / NBRC 15819 / NCTC 12168 / Alc 37) (Ochrobactrum anthropi).